Consider the following 554-residue polypeptide: Wee1-like protein kinase 2-C (554 aa).

Disordered stretches follow at residues 1 to 86 (MRTA…GGEC) and 145 to 183 (TLVN…SQMK). 2 stretches are compositionally biased toward polar residues: residues 38-48 (SPVSSWRTNNC) and 147-163 (VNVN…THFQ). The 275-residue stretch at 213–487 (FLEIEKIGAG…AKNSVLRRCV (275 aa)) folds into the Protein kinase domain. ATP is bound by residues 219 to 227 (IGAGEFGSV) and Lys-242. Asp-340 (proton acceptor) is an active-site residue. Mg(2+) contacts are provided by Asn-345 and Asp-377. Positions 490–516 (AAELQKQLNVEKFKTAMLERELQAAKL) form a coiled coil.

This sequence belongs to the protein kinase superfamily. Ser/Thr protein kinase family. WEE1 subfamily.

Its subcellular location is the nucleus. It catalyses the reaction L-tyrosyl-[protein] + ATP = O-phospho-L-tyrosyl-[protein] + ADP + H(+). Functionally, protein tyrosine kinase that phosphorylates and inhibits cdk1 and acts as a regulator of meiosis in oocytes. Required to ensure the meiotic cell cycle in oocytes by phosphorylating cdk1 at 'Tyr-15', leading to inhibit cdk1 activity and prevent meiosis. The sequence is that of Wee1-like protein kinase 2-C (wee2-c) from Xenopus laevis (African clawed frog).